Here is a 192-residue protein sequence, read N- to C-terminus: 7-methyl-GTP pyrophosphatase (192 aa).

Catalysis depends on Asp69, which acts as the Proton acceptor.

Belongs to the Maf family. YceF subfamily. The cofactor is a divalent metal cation.

The protein localises to the cytoplasm. The catalysed reaction is N(7)-methyl-GTP + H2O = N(7)-methyl-GMP + diphosphate + H(+). Its function is as follows. Nucleoside triphosphate pyrophosphatase that hydrolyzes 7-methyl-GTP (m(7)GTP). May have a dual role in cell division arrest and in preventing the incorporation of modified nucleotides into cellular nucleic acids. In Pseudomonas fluorescens (strain Pf0-1), this protein is 7-methyl-GTP pyrophosphatase.